The primary structure comprises 1256 residues: Protein flightless-1 (1256 aa).

LRR repeat units follow at residues 4–28 (LPFV…MRQM), 29–51 (SRVQ…LGHL), 52–74 (QKLE…LTEL), 75–99 (SCLR…LFHL), 100–122 (EELT…LERA), 124–145 (NLIV…LFIH), 147–169 (TDLL…TRRL), 171–192 (NLKT…QLPS), 218–241 (LANL…VYNV), 243–264 (TLVR…VELW), 265–287 (QRLE…LCKL), 289–312 (KLRR…IGKL), 313–335 (GALE…LCRC), 336–358 (GALK…IHLL), and 360–381 (GLDQ…PSEA). The interval 405 to 476 (AAVPPSMPSS…ESLKPKRWDE (72 aa)) is disordered. Residues 431 to 476 (PRSEGDQDAAKVLKGMKDVAKDKDNEAGAVPEDGKPESLKPKRWDE) are compositionally biased toward basic and acidic residues. Gelsolin-like repeat units follow at residues 512–589 (IEEV…EQFL), 633–703 (EPVA…AEFW), 749–822 (VELP…MQIF), and 1168–1242 (EKCA…SRRF).

This sequence belongs to the villin/gelsolin family. In terms of tissue distribution, found in ovaries, larval fat bodies, brain and adult thorax.

May play a key role in embryonic cellularization by interacting with both the cytoskeleton and other cellular components. Alternatively, it may play a structural role in indirect flight muscle. Vital for embryonic development. In Drosophila melanogaster (Fruit fly), this protein is Protein flightless-1 (fliI).